A 364-amino-acid chain; its full sequence is Putative glutamate--cysteine ligase 2-2 (364 aa).

It belongs to the glutamate--cysteine ligase type 2 family. YbdK subfamily.

It carries out the reaction L-cysteine + L-glutamate + ATP = gamma-L-glutamyl-L-cysteine + ADP + phosphate + H(+). ATP-dependent carboxylate-amine ligase which exhibits weak glutamate--cysteine ligase activity. In Mycobacterium sp. (strain JLS), this protein is Putative glutamate--cysteine ligase 2-2.